We begin with the raw amino-acid sequence, 216 residues long: UPF0323 lipoprotein HPAG1_0235 (216 aa).

Residues 1 to 27 (MKKPYRKISDYAIVGGLSALVMVSIVG) form the signal peptide. A lipid anchor (N-palmitoyl cysteine) is attached at C28. Residue C28 is the site of S-diacylglycerol cysteine attachment. A compositionally biased stretch (polar residues) spans 159–196 (QRTYKSPQAYQRSQNSFSKSAPSASGMGTASKGQSGFF). Residues 159 to 216 (QRTYKSPQAYQRSQNSFSKSAPSASGMGTASKGQSGFFGSSRPTSSPAVSSGTRGFNA) form a disordered region. Positions 198 to 209 (SSRPTSSPAVSS) are enriched in low complexity.

This sequence belongs to the UPF0323 family.

Its subcellular location is the cell membrane. This chain is UPF0323 lipoprotein HPAG1_0235, found in Helicobacter pylori (strain HPAG1).